A 170-amino-acid polypeptide reads, in one-letter code: MDLKKHILNVKDFPIDGIDFKDVTPLLNDADAFAYVIDEMAKFVIECGANVVVAPEARGFLFASAVAYKSHTRFVLVRKPGKLPREVIDIEYTLEYGTNHQQMHKGDIKPGDKVVIIDDVLATGGTIEAIVKLVEMQEGKVEGVSFLIDLPALHDENLLQEYKVQKLVKY.

It belongs to the purine/pyrimidine phosphoribosyltransferase family. In terms of assembly, homodimer.

Its subcellular location is the cytoplasm. The catalysed reaction is AMP + diphosphate = 5-phospho-alpha-D-ribose 1-diphosphate + adenine. It participates in purine metabolism; AMP biosynthesis via salvage pathway; AMP from adenine: step 1/1. Functionally, catalyzes a salvage reaction resulting in the formation of AMP, that is energically less costly than de novo synthesis. This is Adenine phosphoribosyltransferase from Mesoplasma florum (strain ATCC 33453 / NBRC 100688 / NCTC 11704 / L1) (Acholeplasma florum).